Reading from the N-terminus, the 222-residue chain is Adenylate kinase (222 aa).

Gly-10–Thr-15 is an ATP binding site. An NMP region spans residues Ser-30–Val-59. AMP is bound by residues Thr-31, Arg-36, Gly-57–Val-59, Gly-85–Arg-88, and Gln-92. The interval Gly-122–Asp-159 is LID. ATP contacts are provided by residues Arg-123 and Thr-132–Tyr-133. Positions Val-135–Glu-162 are disordered. AMP is bound by residues Arg-156 and Arg-167. Gly-207 is a binding site for ATP.

This sequence belongs to the adenylate kinase family. In terms of assembly, monomer.

The protein localises to the cytoplasm. It carries out the reaction AMP + ATP = 2 ADP. The protein operates within purine metabolism; AMP biosynthesis via salvage pathway; AMP from ADP: step 1/1. Catalyzes the reversible transfer of the terminal phosphate group between ATP and AMP. Plays an important role in cellular energy homeostasis and in adenine nucleotide metabolism. This chain is Adenylate kinase, found in Ralstonia nicotianae (strain ATCC BAA-1114 / GMI1000) (Ralstonia solanacearum).